The chain runs to 340 residues: Protein pelota homolog (340 aa).

The protein belongs to the eukaryotic release factor 1 family. Pelota subfamily. As to quaternary structure, monomer. It depends on a divalent metal cation as a cofactor.

Its subcellular location is the cytoplasm. Its function is as follows. May function in recognizing stalled ribosomes, interact with stem-loop structures in stalled mRNA molecules, and effect endonucleolytic cleavage of the mRNA. May play a role in the release non-functional ribosomes and degradation of damaged mRNAs. Has endoribonuclease activity. This Methanosphaerula palustris (strain ATCC BAA-1556 / DSM 19958 / E1-9c) protein is Protein pelota homolog.